The sequence spans 119 residues: ATP-dependent Clp protease adapter protein ClpS (119 aa).

The interval M1–T29 is disordered.

It belongs to the ClpS family. In terms of assembly, binds to the N-terminal domain of the chaperone ClpA.

Functionally, involved in the modulation of the specificity of the ClpAP-mediated ATP-dependent protein degradation. The polypeptide is ATP-dependent Clp protease adapter protein ClpS (Caulobacter vibrioides (strain ATCC 19089 / CIP 103742 / CB 15) (Caulobacter crescentus)).